Reading from the N-terminus, the 42-residue chain is Beta-defensin 6 (42 aa).

Glutamine 1 is subject to Pyrrolidone carboxylic acid. 3 disulfide bridges follow: cysteine 9-cysteine 38, cysteine 16-cysteine 31, and cysteine 21-cysteine 39.

This sequence belongs to the beta-defensin family. Neutrophilic granules.

The protein localises to the secreted. Its function is as follows. Has bactericidal activity. Active against E.coli ML35 and S.aureus 502A. The protein is Beta-defensin 6 (DEFB6) of Bos taurus (Bovine).